Consider the following 278-residue polypeptide: Small ribosomal subunit protein uS3 (278 aa).

Positions 38-106 constitute a KH type-2 domain; that stretch reads IRKLLSKGME…QVQLNILEVK (69 aa). Residues 213–278 form a disordered region; sequence RQAQAAARAG…APAPAENQEG (66 aa). The span at 214–223 shows a compositional bias: low complexity; the sequence is QAQAAARAGV. Basic and acidic residues predominate over residues 232–253; sequence RGGERPSRGSRGDRPTRADRGG. Positions 259–278 are enriched in low complexity; it reads EATGAATEQAAPAPAENQEG.

Belongs to the universal ribosomal protein uS3 family. As to quaternary structure, part of the 30S ribosomal subunit. Forms a tight complex with proteins S10 and S14.

Its function is as follows. Binds the lower part of the 30S subunit head. Binds mRNA in the 70S ribosome, positioning it for translation. The sequence is that of Small ribosomal subunit protein uS3 from Nocardioides sp. (strain ATCC BAA-499 / JS614).